Here is a 480-residue protein sequence, read N- to C-terminus: Aspartyl/glutamyl-tRNA(Asn/Gln) amidotransferase subunit B (480 aa).

It belongs to the GatB/GatE family. GatB subfamily. In terms of assembly, heterotrimer of A, B and C subunits.

The catalysed reaction is L-glutamyl-tRNA(Gln) + L-glutamine + ATP + H2O = L-glutaminyl-tRNA(Gln) + L-glutamate + ADP + phosphate + H(+). It carries out the reaction L-aspartyl-tRNA(Asn) + L-glutamine + ATP + H2O = L-asparaginyl-tRNA(Asn) + L-glutamate + ADP + phosphate + 2 H(+). Its function is as follows. Allows the formation of correctly charged Asn-tRNA(Asn) or Gln-tRNA(Gln) through the transamidation of misacylated Asp-tRNA(Asn) or Glu-tRNA(Gln) in organisms which lack either or both of asparaginyl-tRNA or glutaminyl-tRNA synthetases. The reaction takes place in the presence of glutamine and ATP through an activated phospho-Asp-tRNA(Asn) or phospho-Glu-tRNA(Gln). This is Aspartyl/glutamyl-tRNA(Asn/Gln) amidotransferase subunit B from Streptococcus pneumoniae (strain P1031).